The sequence spans 387 residues: Patatin group D-3 (387 aa).

An N-terminal signal peptide occupies residues 1–23 (MATTKSFLILIVMILATTSSTFA). The PNPLA domain maps to 32–230 (LSIDGGGIKG…TVADPALLSI (199 aa)). The short motif at 36–41 (GGGIKG) is the GXGXXG element. The GXSXG signature appears at 75–79 (GTSTG). Serine 77 acts as the Nucleophile in catalysis. A glycan (N-linked (GlcNAc...) asparagine) is linked at asparagine 115. Aspartate 216 acts as the Proton acceptor in catalysis. The DGA/G signature appears at 216-218 (DGA). Residues 361–385 (ETYEEALKRFAKLLSDRKKLRANKA) are a coiled coil.

It belongs to the patatin family. Tuber.

The protein localises to the vacuole. Probable lipolytic acyl hydrolase (LAH), an activity which is thought to be involved in the response of tubers to pathogens. The chain is Patatin group D-3 from Solanum tuberosum (Potato).